A 212-amino-acid chain; its full sequence is ATP-dependent Clp protease proteolytic subunit (212 aa).

Serine 107 functions as the Nucleophile in the catalytic mechanism. Residue histidine 132 is part of the active site.

Belongs to the peptidase S14 family. In terms of assembly, fourteen ClpP subunits assemble into 2 heptameric rings which stack back to back to give a disk-like structure with a central cavity, resembling the structure of eukaryotic proteasomes.

It localises to the cytoplasm. It catalyses the reaction Hydrolysis of proteins to small peptides in the presence of ATP and magnesium. alpha-casein is the usual test substrate. In the absence of ATP, only oligopeptides shorter than five residues are hydrolyzed (such as succinyl-Leu-Tyr-|-NHMec, and Leu-Tyr-Leu-|-Tyr-Trp, in which cleavage of the -Tyr-|-Leu- and -Tyr-|-Trp bonds also occurs).. Cleaves peptides in various proteins in a process that requires ATP hydrolysis. Has a chymotrypsin-like activity. Plays a major role in the degradation of misfolded proteins. In Pseudoalteromonas atlantica (strain T6c / ATCC BAA-1087), this protein is ATP-dependent Clp protease proteolytic subunit.